A 73-amino-acid chain; its full sequence is Cell division protein ZapB (73 aa).

Positions 3 to 67 form a coiled coil; it reads LELLSKLETK…WNDKVTGLVG (65 aa).

This sequence belongs to the ZapB family. As to quaternary structure, homodimer. The ends of the coiled-coil dimer bind to each other, forming polymers. Interacts with FtsZ.

The protein resides in the cytoplasm. Functionally, non-essential, abundant cell division factor that is required for proper Z-ring formation. It is recruited early to the divisome by direct interaction with FtsZ, stimulating Z-ring assembly and thereby promoting cell division earlier in the cell cycle. Its recruitment to the Z-ring requires functional FtsA or ZipA. The chain is Cell division protein ZapB from Shewanella sp. (strain MR-4).